The sequence spans 166 residues: Large ribosomal subunit protein uL10 (166 aa).

The protein belongs to the universal ribosomal protein uL10 family. Part of the ribosomal stalk of the 50S ribosomal subunit. The N-terminus interacts with L11 and the large rRNA to form the base of the stalk. The C-terminus forms an elongated spine to which L12 dimers bind in a sequential fashion forming a multimeric L10(L12)X complex.

Functionally, forms part of the ribosomal stalk, playing a central role in the interaction of the ribosome with GTP-bound translation factors. This chain is Large ribosomal subunit protein uL10, found in Pseudomonas putida (strain W619).